We begin with the raw amino-acid sequence, 129 residues long: Small ribosomal subunit protein uS11 (129 aa).

This sequence belongs to the universal ribosomal protein uS11 family. As to quaternary structure, part of the 30S ribosomal subunit. Interacts with proteins S7 and S18. Binds to IF-3.

Its function is as follows. Located on the platform of the 30S subunit, it bridges several disparate RNA helices of the 16S rRNA. Forms part of the Shine-Dalgarno cleft in the 70S ribosome. The polypeptide is Small ribosomal subunit protein uS11 (Lactiplantibacillus plantarum (strain ATCC BAA-793 / NCIMB 8826 / WCFS1) (Lactobacillus plantarum)).